The following is a 246-amino-acid chain: Transcription factor A, mitochondrial (246 aa).

Residues 1–42 (MALLRGVWGVLNALGKSGADLCAGCGSRLRYPFSFAYVPKWF) constitute a mitochondrion transit peptide. The HMG box 1 DNA-binding region spans 50 to 118 (PKKPMTSYVR…VYKEEINRIQ (69 aa)). Phosphoserine; by PKA is present on residues serine 56 and serine 61. Threonine 122 carries the phosphothreonine modification. Positions 155-219 (PKRPRSAYNI…RYYNEMKSWE (65 aa)) form a DNA-binding region, HMG box 2. Serine 160 carries the phosphoserine; by PKA modification. Phosphoserine is present on residues serine 193 and serine 195.

Monomer; binds DNA as a monomer. Homodimer. Component of the mitochondrial transcription initiation complex, composed at least of TFB2M, TFAM and POLRMT. In this complex TFAM recruits POLRMT to the promoter whereas TFB2M induces structural changes in POLRMT to enable promoter opening and trapping of the DNA non-template strand. Upon metabolic stress, forms a complex composed of FOXO3, SIRT3, TFAM and POLRMT. Interacts with TFB1M and TFB2M. Interacts with CLPX; this enhances DNA-binding. In terms of processing, phosphorylation by PKA within the HMG box 1 impairs DNA binding and promotes degradation by the AAA+ Lon protease.

It localises to the mitochondrion. Its subcellular location is the mitochondrion matrix. The protein localises to the mitochondrion nucleoid. Its function is as follows. Binds to the mitochondrial light strand promoter and functions in mitochondrial transcription regulation. Component of the mitochondrial transcription initiation complex, composed at least of TFB2M, TFAM and POLRMT that is required for basal transcription of mitochondrial DNA. In this complex, TFAM recruits POLRMT to a specific promoter whereas TFB2M induces structural changes in POLRMT to enable promoter opening and trapping of the DNA non-template strand. Required for accurate and efficient promoter recognition by the mitochondrial RNA polymerase. Promotes transcription initiation from the HSP1 and the light strand promoter by binding immediately upstream of transcriptional start sites. Is able to unwind DNA. Bends the mitochondrial light strand promoter DNA into a U-turn shape via its HMG boxes. Required for maintenance of normal levels of mitochondrial DNA. May play a role in organizing and compacting mitochondrial DNA. This Bos taurus (Bovine) protein is Transcription factor A, mitochondrial.